The sequence spans 165 residues: Cyclic pyranopterin monophosphate synthase (165 aa).

Substrate is bound by residues 83-85 (FCH) and 120-121 (ME). Asp135 is a catalytic residue.

The protein belongs to the MoaC family. Homohexamer; trimer of dimers.

It carries out the reaction (8S)-3',8-cyclo-7,8-dihydroguanosine 5'-triphosphate = cyclic pyranopterin phosphate + diphosphate. It functions in the pathway cofactor biosynthesis; molybdopterin biosynthesis. Functionally, catalyzes the conversion of (8S)-3',8-cyclo-7,8-dihydroguanosine 5'-triphosphate to cyclic pyranopterin monophosphate (cPMP). In Xanthomonas campestris pv. campestris (strain 8004), this protein is Cyclic pyranopterin monophosphate synthase.